A 296-amino-acid chain; its full sequence is ATP-dependent ribose-1-phosphate kinase (296 aa).

Catalysis depends on D242, which acts as the Proton acceptor.

The protein belongs to the carbohydrate kinase PfkB family. Mg(2+) is required as a cofactor.

It catalyses the reaction alpha-D-ribose 1-phosphate + ATP = alpha-D-ribose 1,5-bisphosphate + ADP + H(+). Its activity is regulated as follows. Requires salt for kinase activity. 2.0 M is the optimal KCl concentration. Its function is as follows. Kinase involved in the non-carboxylating pentose bisphosphate pathway, a nucleoside degradation pathway present in some halophilic archaea. Catalyzes the ATP-dependent phosphorylation of ribose 1-phosphate (R1P) to ribose 1,5-bisphosphate (R15P). Shows weak activity towards various other phosphate acceptors, such as xylulose, 2'-deoxyguanosine and D-ribulose. ATP is the most preferred phosphate donor, followed by CTP and GTP. The sequence is that of ATP-dependent ribose-1-phosphate kinase from Halopiger xanaduensis (strain DSM 18323 / JCM 14033 / SH-6).